The sequence spans 101 residues: Apolipoprotein C-II (101 aa).

The signal sequence occupies residues 1–22; the sequence is MGARHLLALLLVLLVLGFEVQG. Positions 66 to 74 are lipid binding; that stretch reads TMDEKIRDM. Residues 78 to 101 are lipoprotein lipase cofactor; the sequence is STAAVSTYVGIFTDQLLSLLKGED.

This sequence belongs to the apolipoprotein C2 family. In terms of processing, proapolipoprotein C-II is synthesized as a sialic acid containing glycoprotein which is subsequently desialylated prior to its proteolytic processing. Post-translationally, proapolipoprotein C-II, the major form found in plasma undergoes proteolytic cleavage of its N-terminal hexapeptide to generate apolipoprotein C-II, which occurs as the minor form in plasma.

It localises to the secreted. In terms of biological role, component of chylomicrons, very low-density lipoproteins (VLDL), low-density lipoproteins (LDL), and high-density lipoproteins (HDL) in plasma. Plays an important role in lipoprotein metabolism as an activator of lipoprotein lipase. Both proapolipoprotein C-II and apolipoprotein C-II can activate lipoprotein lipase. The chain is Apolipoprotein C-II (APOC2) from Tapirus terrestris (Lowland tapir).